A 224-amino-acid chain; its full sequence is RNA-binding protein 24-B (224 aa).

Residues 11-88 (TKIFVGGLPY…RKANVNLAYL (78 aa)) form the RRM domain.

The protein localises to the nucleus. It localises to the cytoplasm. In terms of biological role, multifunctional RNA-binding protein involved in the regulation of pre-mRNA splicing, mRNA stability and mRNA translation important for cell fate decision and differentiation. Plays a major role in pre-mRNA alternative splicing regulation. Mediates preferentially muscle-specific exon inclusion in numerous mRNAs important for striated cardiac and skeletal muscle cell differentiation. Binds to intronic splicing enhancer (ISE) composed of stretches of GU-rich motifs localized in flanking intron of exon that will be included by alternative splicing. Involved in embryonic stem cell (ESC) transition to cardiac cell differentiation by promoting pre-mRNA alternative splicing events of several pluripotency and/or differentiation genes. Plays a role in the regulation of mRNA stability and mRNA translation to which it is bound. Involved in myogenic differentiation by regulating myog levels. Binds to a huge amount of mRNAs. Required for embryonic heart development, sarcomer and M-band formation in striated muscles. The polypeptide is RNA-binding protein 24-B (rbm24-b) (Xenopus laevis (African clawed frog)).